Reading from the N-terminus, the 88-residue chain is UPF0335 protein WRi_003770 (88 aa).

This sequence belongs to the UPF0335 family.

This is UPF0335 protein WRi_003770 from Wolbachia sp. subsp. Drosophila simulans (strain wRi).